Here is a 449-residue protein sequence, read N- to C-terminus: Packaging protein 1 (449 aa).

Residues 1–77 (METRGRRPAA…QPAKRGDMLD (77 aa)) are disordered. 171–178 (GPTGCGKS) contributes to the ATP binding site. A DNA-binding region spans residues 440-449 (RAYRARKTPK).

The protein belongs to the adenoviridae packaging protein 1 family. Homodimer. Part of a genome packaging complex composed of packaging proteins 1, 2 and 3; this complex specifically binds to the packaging sequence on the left end of viral genomic DNA and performs packaging of the viral genome. Interacts with protein 33K.

Its subcellular location is the virion. It is found in the host nucleus. The protein resides in the host nucleoplasm. It localises to the host nucleolus. Its function is as follows. Component of the packaging machinery which encapsidates the viral DNA into preformed capsids and transcriptional activator of the viral major late promoter (MLP). Binds, along with packaging proteins 2 and 3, to the specific packaging sequence on the left end of viral genomic DNA and displays ATPase activity thereby providing the power stroke of the packaging machinery. The activity of packaging protein IVa2 is stimulated by protein 33K which acts as a terminase. May be the protein that pumps DNA into the capsid powered by ATP hydrolysis. Specifically binds to the 5'-CG-3' nucleotides of the repeats making up the packaging sequence. Component of the DEF-A and DEF-B transcription factors that bind downstream elements of the major late promoter (MLP), and stimulate transcription from the MLP after initiation of viral DNA replication. DEF-A is a heterodimer packaging proteins 1 and 2 and DEF-B is a homodimer of packaging protein 1. This is Packaging protein 1 from Homo sapiens (Human).